Here is a 1167-residue protein sequence, read N- to C-terminus: ATP-dependent helicase/nuclease subunit A (1167 aa).

Residues 2–451 form the UvrD-like helicase ATP-binding domain; it reads KNWTAEQMRA…IELSLNFRSR (450 aa). 23–30 contributes to the ATP binding site; it reads AAAGAGKT. One can recognise a UvrD-like helicase C-terminal domain in the interval 478 to 768; that stretch reads KAFLKKGADY…RVMSVHKSKG (291 aa).

The protein belongs to the helicase family. AddA subfamily. In terms of assembly, heterodimer of AddA and AddB/RexB. Requires Mg(2+) as cofactor.

The catalysed reaction is Couples ATP hydrolysis with the unwinding of duplex DNA by translocating in the 3'-5' direction.. It carries out the reaction ATP + H2O = ADP + phosphate + H(+). The heterodimer acts as both an ATP-dependent DNA helicase and an ATP-dependent, dual-direction single-stranded exonuclease. Recognizes the chi site generating a DNA molecule suitable for the initiation of homologous recombination. The AddA nuclease domain is required for chi fragment generation; this subunit has the helicase and 3' -&gt; 5' nuclease activities. This is ATP-dependent helicase/nuclease subunit A from Carboxydothermus hydrogenoformans (strain ATCC BAA-161 / DSM 6008 / Z-2901).